The chain runs to 356 residues: Glutamine synthetase nodule isozyme (356 aa).

The 81-residue stretch at 19–99 (IIAEYIWIGG…VMCDAYTPAG (81 aa)) folds into the GS beta-grasp domain. Residues 41–66 (PGPVSDPSKLPKWNYDGSSTGQAPGE) are disordered. Positions 106-356 (KRHNAAKIFS…IADTTILWKP (251 aa)) constitute a GS catalytic domain.

Belongs to the glutamine synthetase family. In terms of assembly, homooctamer.

The protein resides in the cytoplasm. The catalysed reaction is L-glutamate + NH4(+) + ATP = L-glutamine + ADP + phosphate + H(+). This chain is Glutamine synthetase nodule isozyme, found in Vigna aconitifolia (Moth bean).